The sequence spans 339 residues: Sphingolipid long chain base-responsive protein PIL1 (339 aa).

Over residues 1–19 (MHRTYSLRNSRAPTASQLQ) the composition is skewed to polar residues. Residues 1 to 31 (MHRTYSLRNSRAPTASQLQNPPPPPSTTKGR) are disordered. A Phosphothreonine modification is found at Thr14. Residue Ser16 is modified to Phosphoserine. A Glycyl lysine isopeptide (Lys-Gly) (interchain with G-Cter in ubiquitin) cross-link involves residue Lys29. 4 positions are modified to phosphoserine: Ser45, Ser98, Ser163, and Ser230. Thr233 carries the phosphothreonine modification. The segment at 273-339 (SFKQDYEDFE…SESLPQQTTA (67 aa)) is disordered. Residues 279 to 293 (EDFEPEEGEEEEEED) show a composition bias toward acidic residues. The residue at position 299 (Ser299) is a Phosphoserine. Positions 301-318 (DEQEDGQIEEPEQEEEGA) are enriched in acidic residues. Polar residues predominate over residues 326–339 (GHQQSESLPQQTTA).

Phosphorylated by PKH1 and PKH2. Phosphorylation is inhibited by sphingolipid long chain bases (LCBs).

The protein localises to the lipid droplet. Negative regulator of cell wall integrity (CWI) in unstressed cells, probably by inhibiting protein kinase PKH1/PHK2 activity and regulating their downstream CWI pathways PKC1-MAP kinase pathway and protein kinase YPK1 pathway. Activity may be regulated by the transient increase of sphingolipid long chain bases (LCBs) during heat stress. The polypeptide is Sphingolipid long chain base-responsive protein PIL1 (PIL1) (Saccharomyces cerevisiae (strain ATCC 204508 / S288c) (Baker's yeast)).